The sequence spans 170 residues: Large ribosomal subunit protein uL10 (170 aa).

Belongs to the universal ribosomal protein uL10 family. As to quaternary structure, part of the ribosomal stalk of the 50S ribosomal subunit. The N-terminus interacts with L11 and the large rRNA to form the base of the stalk. The C-terminus forms an elongated spine to which L12 dimers bind in a sequential fashion forming a multimeric L10(L12)X complex.

In terms of biological role, forms part of the ribosomal stalk, playing a central role in the interaction of the ribosome with GTP-bound translation factors. In Lactobacillus acidophilus (strain ATCC 700396 / NCK56 / N2 / NCFM), this protein is Large ribosomal subunit protein uL10.